Consider the following 447-residue polypeptide: Phosphoglucosamine mutase (447 aa).

Serine 100 functions as the Phosphoserine intermediate in the catalytic mechanism. The Mg(2+) site is built by serine 100, aspartate 240, aspartate 242, and aspartate 244. Serine 100 is modified (phosphoserine).

This sequence belongs to the phosphohexose mutase family. The cofactor is Mg(2+). In terms of processing, activated by phosphorylation.

It catalyses the reaction alpha-D-glucosamine 1-phosphate = D-glucosamine 6-phosphate. Catalyzes the conversion of glucosamine-6-phosphate to glucosamine-1-phosphate. The chain is Phosphoglucosamine mutase from Clostridium botulinum (strain Eklund 17B / Type B).